The primary structure comprises 206 residues: Small ribosomal subunit protein uS4 (206 aa).

The S4 RNA-binding domain occupies 96–156 (CRLDNVVYRM…EKAKNQLRIA (61 aa)).

The protein belongs to the universal ribosomal protein uS4 family. In terms of assembly, part of the 30S ribosomal subunit. Contacts protein S5. The interaction surface between S4 and S5 is involved in control of translational fidelity.

Functionally, one of the primary rRNA binding proteins, it binds directly to 16S rRNA where it nucleates assembly of the body of the 30S subunit. With S5 and S12 plays an important role in translational accuracy. The protein is Small ribosomal subunit protein uS4 of Azotobacter vinelandii (strain DJ / ATCC BAA-1303).